The following is a 147-amino-acid chain: Small ribosomal subunit protein uS12 (147 aa).

The protein belongs to the universal ribosomal protein uS12 family. As to quaternary structure, part of the 30S ribosomal subunit.

With S4 and S5 plays an important role in translational accuracy. Located at the interface of the 30S and 50S subunits. The chain is Small ribosomal subunit protein uS12 from Thermococcus kodakarensis (strain ATCC BAA-918 / JCM 12380 / KOD1) (Pyrococcus kodakaraensis (strain KOD1)).